Consider the following 141-residue polypeptide: Calcitonin (141 aa).

The first 25 residues, 1–25 (MGFQKFSPFLALSILVLLQAGSLHA), serve as a signal peptide directing secretion. Residues 26 to 82 (APFRSALESSPADPATLSEDEARLLLAALVQDYVQMKASELEQEQEREGSSLDSPRS) constitute a propeptide that is removed on maturation. Ser43 is subject to Phosphoserine. Disordered regions lie at residues 64–85 (SELEQEQEREGSSLDSPRSKRC) and 111–141 (IGVGAPGKKRDMSSDLERDHRPHVSMPQNAN). Cys85 and Cys91 are oxidised to a cystine. Pro116 is subject to Proline amide. A compositionally biased stretch (basic and acidic residues) spans 118–132 (KKRDMSSDLERDHRP).

The protein belongs to the calcitonin family.

The protein resides in the secreted. Functionally, calcitonin is a peptide hormone that causes a rapid but short-lived drop in the level of calcium and phosphate in blood by promoting the incorporation of those ions in the bones. Calcitonin function is mediated by the calcitonin receptor/CALCR and the CALCR-RAMP2 (AMYR2) receptor complex. Its function is as follows. Katacalcin is a potent plasma calcium-lowering peptide. This chain is Calcitonin, found in Homo sapiens (Human).